Reading from the N-terminus, the 494-residue chain is Arp2/3 complex-activating protein rickA (494 aa).

Positions 312–494 (PLENNIPPPP…RNSQKPSFVR (183 aa)) are disordered. A compositionally biased stretch (pro residues) spans 317-357 (IPPPPPPPPPLPDNNIPPPPPPPPPLPDNNIPPPPPPPPMA). The 18-residue stretch at 383–400 (DTSDLMREIAGPKKLKKV) folds into the WH2 domain. The tract at residues 421-454 (VNKPSGLESIFARRVAIEMSDSSSSESDSGNWSD) is central and acidic domains. A compositionally biased stretch (low complexity) spans 440–456 (SDSSSSESDSGNWSDVS). The span at 477–494 (THAQKINNRNSQKPSFVR) shows a compositional bias: polar residues.

The protein resides in the cell surface. Its function is as follows. Recruits and activates the Arp2/3 complex, which in turn leads to actin polymerization, promoting Rickettsia motility during infection. The sequence is that of Arp2/3 complex-activating protein rickA (rickA) from Rickettsia rickettsii.